The primary structure comprises 175 residues: uncharacterized protein (175 aa).

Positions 1–23 are cleaved as a signal peptide; it reads MILVLLLILIAFLYIYFPSSLNQ.

This is an uncharacterized protein from Invertebrate iridescent virus 6 (IIV-6).